Consider the following 296-residue polypeptide: Phosphatidylserine decarboxylase proenzyme (296 aa).

Residues Asp-113, His-169, and Ser-256 each act as charge relay system; for autoendoproteolytic cleavage activity in the active site. Residue Ser-256 is the Schiff-base intermediate with substrate; via pyruvic acid; for decarboxylase activity of the active site. Position 256 is a pyruvic acid (Ser); by autocatalysis (Ser-256).

The protein belongs to the phosphatidylserine decarboxylase family. PSD-B subfamily. Prokaryotic type II sub-subfamily. Heterodimer of a large membrane-associated beta subunit and a small pyruvoyl-containing alpha subunit. The cofactor is pyruvate. Post-translationally, is synthesized initially as an inactive proenzyme. Formation of the active enzyme involves a self-maturation process in which the active site pyruvoyl group is generated from an internal serine residue via an autocatalytic post-translational modification. Two non-identical subunits are generated from the proenzyme in this reaction, and the pyruvate is formed at the N-terminus of the alpha chain, which is derived from the carboxyl end of the proenzyme. The autoendoproteolytic cleavage occurs by a canonical serine protease mechanism, in which the side chain hydroxyl group of the serine supplies its oxygen atom to form the C-terminus of the beta chain, while the remainder of the serine residue undergoes an oxidative deamination to produce ammonia and the pyruvoyl prosthetic group on the alpha chain. During this reaction, the Ser that is part of the protease active site of the proenzyme becomes the pyruvoyl prosthetic group, which constitutes an essential element of the active site of the mature decarboxylase.

It localises to the cell membrane. It carries out the reaction a 1,2-diacyl-sn-glycero-3-phospho-L-serine + H(+) = a 1,2-diacyl-sn-glycero-3-phosphoethanolamine + CO2. Its pathway is phospholipid metabolism; phosphatidylethanolamine biosynthesis; phosphatidylethanolamine from CDP-diacylglycerol: step 2/2. Catalyzes the formation of phosphatidylethanolamine (PtdEtn) from phosphatidylserine (PtdSer). The protein is Phosphatidylserine decarboxylase proenzyme of Clostridium botulinum (strain Alaska E43 / Type E3).